Reading from the N-terminus, the 289-residue chain is Probable 2-keto-3-deoxyxylonate dehydratase (289 aa).

E144, E146, and D164 together coordinate Mg(2+).

It belongs to the FAH family.

The enzyme catalyses 2-dehydro-3-deoxy-D-arabinonate = 2,5-dioxopentanoate + H2O. It functions in the pathway carbohydrate metabolism; D-xylose degradation. Functionally, probable 2-keto-3-deoxyxylonate dehydratase involved in the degradation of D-xylose, a major component of hemicelluloses such as xylan. Catalyzes the fourth reaction in the xylose utilization pathway through dehydratation of 2-dehydro-3-deoxy-D-xylonate into alpha-ketoglutarate semialdehyde (2,5-dioxopentanoate). This chain is Probable 2-keto-3-deoxyxylonate dehydratase, found in Haloferax volcanii (strain ATCC 29605 / DSM 3757 / JCM 8879 / NBRC 14742 / NCIMB 2012 / VKM B-1768 / DS2) (Halobacterium volcanii).